A 197-amino-acid polypeptide reads, in one-letter code: OV-16 antigen (197 aa).

A signal peptide spans 1–16; the sequence is MHCLQVVIAIVLYSFG. N-linked (GlcNAc...) asparagine glycosylation is found at Asn56, Asn61, Asn119, and Asn124.

The protein belongs to the phosphatidylethanolamine-binding protein family. In terms of tissue distribution, hypodermis, cuticle and uterus.

The protein is OV-16 antigen (OV16) of Onchocerca volvulus.